The following is a 226-amino-acid chain: Cytidylate kinase (226 aa).

Glycine 12 to threonine 20 is an ATP binding site.

This sequence belongs to the cytidylate kinase family. Type 1 subfamily.

Its subcellular location is the cytoplasm. The enzyme catalyses CMP + ATP = CDP + ADP. The catalysed reaction is dCMP + ATP = dCDP + ADP. The polypeptide is Cytidylate kinase (Xanthomonas campestris pv. campestris (strain 8004)).